The chain runs to 69 residues: uncharacterized protein (69 aa).

2 disordered regions span residues 1 to 32 (MSAP…GWGD) and 44 to 69 (QSDA…APSD). Composition is skewed to basic and acidic residues over residues 7-32 (NLDR…GWGD) and 46-69 (DADK…APSD).

This is an uncharacterized protein from Schizosaccharomyces pombe (strain 972 / ATCC 24843) (Fission yeast).